Here is a 322-residue protein sequence, read N- to C-terminus: Cytochrome c biogenesis protein CcsA (322 aa).

The next 8 helical transmembrane spans lie at 6–26 (LQLILETFSFFIYFILTFLFF), 45–65 (LIANVSIFLLLITRWITAGYF), 69–89 (NLYESLFFLVWGLNTIWLFLY), 97–117 (LLDNSVSLLLTLLVGFLHFIL), 144–164 (MISYATLMIGSLLSIIYLYFL), 230–250 (LITFGFPLLTIGIIAGAVWAN), 265–285 (WALITWLIFAIYLHTRIIKGW), and 291–311 (AMVASLGFFIIWICYLGVNLL).

The protein belongs to the CcmF/CycK/Ccl1/NrfE/CcsA family. In terms of assembly, may interact with Ccs1.

The protein localises to the plastid. It is found in the cyanelle thylakoid membrane. Its function is as follows. Required during biogenesis of c-type cytochromes (cytochrome c6 and cytochrome f) at the step of heme attachment. The sequence is that of Cytochrome c biogenesis protein CcsA from Cyanophora paradoxa.